The primary structure comprises 431 residues: MVKKYKVIDNFISKEALSGILLLFVTLFAIIVANSNFGDFYFNLWDKPLGVAIGDFIISMPLRLWINDGLMALFFLMVSLEIKRELLIGELASVSRAMFPFVASLGGMIVPASIYIALNPDNFIGFGIPMGTDTAFAIAMLILLGKRVNTALKLFLVALAVIDDLGAIIVVATVYTSELKLEYFLHAAFVYGLIWLLNYFDVKKLSFYLFLGIFLWIFIHETGVHATIAGVLLAFAIPISSRMNEKKFIEKTKADLEEFERCMDDKPILNHRQINALEGIAYGYDRVQNPLIRLEHDLHGFSAFFIMPIFAFSNAGVLLDFSTVWTNWMIVLGVALGLLVGKPLGIFGFTYAATKLNIIKKPKNISWFEIISVGFIAGIGFTMSIFIANLAFIDEDTISAIKIGIFTASFMATVIGMILISINYKFKISKA.

11 consecutive transmembrane segments (helical) span residues 17–37, 56–76, 98–118, 123–143, 154–174, 182–202, 209–229, 301–321, 329–349, 373–393, and 400–420; these read LSGI…NSNF, FIIS…LFFL, MFPF…YIAL, FIGF…MLIL, LFLV…VATV, EYFL…YFDV, LFLG…ATIA, FSAF…LLDF, MIVL…IFGF, VGFI…LAFI, and AIKI…MILI.

This sequence belongs to the NhaA Na(+)/H(+) (TC 2.A.33) antiporter family.

The protein localises to the cell inner membrane. It catalyses the reaction Na(+)(in) + 2 H(+)(out) = Na(+)(out) + 2 H(+)(in). In terms of biological role, na(+)/H(+) antiporter that extrudes sodium in exchange for external protons. The sequence is that of Na(+)/H(+) antiporter NhaA 1 from Aliarcobacter butzleri (strain RM4018) (Arcobacter butzleri).